A 203-amino-acid chain; its full sequence is Translation initiation factor IF-3 (203 aa).

The segment covering 172 to 182 (EAPKNEKKTKE) has biased composition (basic and acidic residues). The disordered stretch occupies residues 172 to 203 (EAPKNEKKTKENNPPFNRINLMKGENHAKNED).

This sequence belongs to the IF-3 family. As to quaternary structure, monomer.

The protein localises to the cytoplasm. IF-3 binds to the 30S ribosomal subunit and shifts the equilibrium between 70S ribosomes and their 50S and 30S subunits in favor of the free subunits, thus enhancing the availability of 30S subunits on which protein synthesis initiation begins. This is Translation initiation factor IF-3 from Helicobacter pylori (strain ATCC 700392 / 26695) (Campylobacter pylori).